The chain runs to 196 residues: Alpha-crystallin A chain (196 aa).

At M1 the chain carries N-acetylmethionine. The interval M1–E63 is required for complex formation with BFSP1 and BFSP2. Position 6 is a deamidated glutamine; partial (Q6). Residue S45 is modified to Phosphoserine. Q50 carries the deamidated glutamine; partial modification. Residues H76–S185 enclose the sHSP domain. Residues K93 and K122 each carry the N6-acetyllysine modification. Position 123 (H123) interacts with Zn(2+). A Deamidated asparagine; partial modification is found at N124. E125 and H130 together coordinate Zn(2+). Phosphoserine is present on S145. N146 is subject to Deamidated asparagine; partial. The tract at residues K168–S196 is disordered. Q170 bears the Deamidated glutamine; partial mark. The segment covering G176–P190 has biased composition (basic and acidic residues). H177 lines the Zn(2+) pocket. Residue S185 is glycosylated (O-linked (GlcNAc) serine).

Belongs to the small heat shock protein (HSP20) family. As to quaternary structure, heteropolymer composed of three CRYAA and one CRYAB subunits. Inter-subunit bridging via zinc ions enhances stability, which is crucial as there is no protein turn over in the lens. Can also form homodimers and homotetramers (dimers of dimers) which serve as the building blocks of homooligomers. Within homooligomers, the zinc-binding motif is created from residues of 3 different molecules. His-123 and Glu-125 from one molecule are ligands of the zinc ion, and His-130 and His-177 residues from additional molecules complete the site with tetrahedral coordination geometry. Part of a complex required for lens intermediate filament formation composed of BFSP1, BFSP2 and CRYAA. Post-translationally, acetylation at Lys-93 may increase chaperone activity. Undergoes age-dependent proteolytical cleavage at the C-terminus.

It localises to the cytoplasm. The protein resides in the nucleus. Contributes to the transparency and refractive index of the lens. Acts as a chaperone, preventing aggregation of various proteins under a wide range of stress conditions. Required for the correct formation of lens intermediate filaments as part of a complex composed of BFSP1, BFSP2 and CRYAA. This chain is Alpha-crystallin A chain (Cryaa), found in Mus musculus (Mouse).